The chain runs to 299 residues: ClpXP adapter protein SpxH (299 aa).

Belongs to the SpxH family. As to quaternary structure, interacts with Spx. Interacts with SpxO/YuzO.

It localises to the cytoplasm. With respect to regulation, irreversible aggregation upon several stress conditions prevents interaction with Spx and therefore leads to Spx stabilization. Inhibited by interaction with SpxO/YuzO. Its function is as follows. Adapter protein required for efficient degradation of Spx by ClpXP under non-stress conditions. Interaction with Spx stabilizes Spx and exposes the C-terminus of Spx for recognition and proteolysis by ClpXP. Is specific for Spx and does not enhance proteolysis by ClpCP protease. Probably binds 2 zinc ions. In Bacillus subtilis (strain 168), this protein is ClpXP adapter protein SpxH.